Here is a 468-residue protein sequence, read N- to C-terminus: tRNA threonylcarbamoyladenosine dehydratase (468 aa).

Helical transmembrane passes span Phe15–Phe35, Asn109–Ala129, and Ile315–Leu335.

This sequence belongs to the HesA/MoeB/ThiF family.

It is found in the mitochondrion outer membrane. Catalyzes the ATP-dependent dehydration of threonylcarbamoyladenosine at position 37 (t(6)A37) to form cyclic t(6)A37 (ct(6)A37) in tRNAs that read codons beginning with adenine. The protein is tRNA threonylcarbamoyladenosine dehydratase (tcd1) of Schizosaccharomyces pombe (strain 972 / ATCC 24843) (Fission yeast).